The primary structure comprises 232 residues: Protein FAM246B (232 aa).

Residues 19–31 (EVLRRVTGRRRDP) are compositionally biased toward basic and acidic residues. Disordered regions lie at residues 19-47 (EVLRRVTGRRRDPGPQSNGPGREDARAPG), 80-101 (AAGAGERTGAHSRGSVCSVCGE), 151-179 (ALLPPPPPSPPARREPRAVPRAAPRGPTL), and 191-232 (AASR…GGGD). A compositionally biased stretch (basic residues) spans 211 to 220 (APARKNHKKM).

Belongs to the FAM246 family.

The polypeptide is Protein FAM246B (Homo sapiens (Human)).